The following is a 603-amino-acid chain: Probable methyltransferase PMT4 (603 aa).

Residues 1–12 are Cytoplasmic-facing; the sequence is MKVASVIGLRPR. A helical; Signal-anchor for type II membrane protein membrane pass occupies residues 13 to 33; the sequence is ISGLLFLTLGVIALITILVPN. The Lumenal portion of the chain corresponds to 34–603; it reads SDSSSTTSTT…LVCQKPLLKK (570 aa). Asparagine 96 and asparagine 393 each carry an N-linked (GlcNAc...) asparagine glycan.

It belongs to the methyltransferase superfamily.

The protein localises to the endoplasmic reticulum membrane. The protein is Probable methyltransferase PMT4 of Arabidopsis thaliana (Mouse-ear cress).